A 481-amino-acid polypeptide reads, in one-letter code: 6-phosphogluconate dehydrogenase, decarboxylating (481 aa).

NADP(+) is bound by residues 11 to 16, 34 to 36, 76 to 78, and asparagine 104; these read GLAVMG, NRT, and VKA. Residues asparagine 104 and 130 to 132 contribute to the substrate site; that span reads SGG. Residue lysine 184 is the Proton acceptor of the active site. 187–188 contacts substrate; that stretch reads HN. Glutamate 191 functions as the Proton donor in the catalytic mechanism. Positions 192, 259, 286, 445, and 451 each coordinate substrate.

Belongs to the 6-phosphogluconate dehydrogenase family. Homodimer.

The catalysed reaction is 6-phospho-D-gluconate + NADP(+) = D-ribulose 5-phosphate + CO2 + NADPH. It functions in the pathway carbohydrate degradation; pentose phosphate pathway; D-ribulose 5-phosphate from D-glucose 6-phosphate (oxidative stage): step 3/3. Catalyzes the oxidative decarboxylation of 6-phosphogluconate to ribulose 5-phosphate and CO(2), with concomitant reduction of NADP to NADPH. The sequence is that of 6-phosphogluconate dehydrogenase, decarboxylating (Pgd) from Ceratitis capitata (Mediterranean fruit fly).